Consider the following 62-residue polypeptide: Photosystem II reaction center protein Z (62 aa).

A run of 2 helical transmembrane segments spans residues 8-28 (LIAA…VVFS) and 41-61 (WGGA…SIVV).

It belongs to the PsbZ family. As to quaternary structure, PSII is composed of 1 copy each of membrane proteins PsbA, PsbB, PsbC, PsbD, PsbE, PsbF, PsbH, PsbI, PsbJ, PsbK, PsbL, PsbM, PsbT, PsbX, PsbY, PsbZ, Psb30/Ycf12, peripheral proteins PsbO, CyanoQ (PsbQ), PsbU, PsbV and a large number of cofactors. It forms dimeric complexes.

The protein resides in the cellular thylakoid membrane. Functionally, may control the interaction of photosystem II (PSII) cores with the light-harvesting antenna, regulates electron flow through the 2 photosystem reaction centers. PSII is a light-driven water plastoquinone oxidoreductase, using light energy to abstract electrons from H(2)O, generating a proton gradient subsequently used for ATP formation. The sequence is that of Photosystem II reaction center protein Z from Acaryochloris marina (strain MBIC 11017).